A 110-amino-acid chain; its full sequence is uncharacterized protein (110 aa).

The protein belongs to the HesB/IscA family.

This is an uncharacterized protein from Rickettsia prowazekii (strain Madrid E).